A 292-amino-acid polypeptide reads, in one-letter code: MDEEAKIRTCQLLDLPWEDVLIPHILCYLPLQHLVSLQRVSKQFHSLIQVYLTNCRTFDLTSIGPSIPKEAFCSMLKDNKVLHSLSLQNCSDWVTDKELLPVIGQNQHLQRVDMSGCVCLTRHSLVAVSLSCMHLQHLGLAHCEWVDSLSLRSLADHCGGLQSIDLTACRQLKDDAICYLAKKCLKLRSLSLAVNANITDESVEEVAKNCRGLEQLDLTGCLRVRNQSIRTLAEYCPKLQSLKVNHCHNVTESSLDPLRKRNVVIDVEPPLQRALVLLQDVLGFAPFINLQI.

The 48-residue stretch at 12-59 (LLDLPWEDVLIPHILCYLPLQHLVSLQRVSKQFHSLIQVYLTNCRTFD) folds into the F-box domain. LRR repeat units lie at residues 134–155 (HLQHLGLAHCEWVDSLSLRSLA), 160–181 (GLQSIDLTACRQLKDDAICYLA), 186–207 (KLRSLSLAVNANITDESVEEVA), 212–233 (GLEQLDLTGCLRVRNQSIRTLA), and 238–259 (KLQSLKVNHCHNVTESSLDPLR).

The protein belongs to the FBXL15 family. Part of the SCF (SKP1-CUL1-F-box) E3 ubiquitin-protein ligase complex SCF(FBXL15).

It is found in the cytoplasm. It functions in the pathway protein modification; protein ubiquitination. Functionally, substrate recognition component of a SCF (SKP1-CUL1-F-box protein) E3 ubiquitin-protein ligase complex which mediates the ubiquitination and subsequent proteasomal degradation of target proteins. Acts as a positive regulator of the BMP signaling pathway. Required for dorsal/ventral pattern formation. In Dicentrarchus labrax (European seabass), this protein is F-box/LRR-repeat protein 15 (fbxl15).